Consider the following 235-residue polypeptide: ATP phosphoribosyltransferase (235 aa).

The protein belongs to the ATP phosphoribosyltransferase family. Short subfamily. As to quaternary structure, heteromultimer composed of HisG and HisZ subunits.

It is found in the cytoplasm. It carries out the reaction 1-(5-phospho-beta-D-ribosyl)-ATP + diphosphate = 5-phospho-alpha-D-ribose 1-diphosphate + ATP. It functions in the pathway amino-acid biosynthesis; L-histidine biosynthesis; L-histidine from 5-phospho-alpha-D-ribose 1-diphosphate: step 1/9. Functionally, catalyzes the condensation of ATP and 5-phosphoribose 1-diphosphate to form N'-(5'-phosphoribosyl)-ATP (PR-ATP). Has a crucial role in the pathway because the rate of histidine biosynthesis seems to be controlled primarily by regulation of HisG enzymatic activity. This chain is ATP phosphoribosyltransferase, found in Synechococcus sp. (strain JA-2-3B'a(2-13)) (Cyanobacteria bacterium Yellowstone B-Prime).